The following is a 348-amino-acid chain: Nicotinate-nucleotide--dimethylbenzimidazole phosphoribosyltransferase (348 aa).

Glu317 functions as the Proton acceptor in the catalytic mechanism.

Belongs to the CobT family.

The catalysed reaction is 5,6-dimethylbenzimidazole + nicotinate beta-D-ribonucleotide = alpha-ribazole 5'-phosphate + nicotinate + H(+). It functions in the pathway nucleoside biosynthesis; alpha-ribazole biosynthesis; alpha-ribazole from 5,6-dimethylbenzimidazole: step 1/2. Catalyzes the synthesis of alpha-ribazole-5'-phosphate from nicotinate mononucleotide (NAMN) and 5,6-dimethylbenzimidazole (DMB). In Clostridioides difficile (strain 630) (Peptoclostridium difficile), this protein is Nicotinate-nucleotide--dimethylbenzimidazole phosphoribosyltransferase.